A 400-amino-acid chain; its full sequence is GDNF family receptor alpha-3 (400 aa).

Positions 1-31 (MVRPLNPRPLPPVVLMLLLLLPPSPLPLAAG) are cleaved as a signal peptide. A disulfide bridge connects residues C51 and C57. Residues N95 and N148 are each glycosylated (N-linked (GlcNAc...) asparagine). Intrachain disulfides connect C162-C218, C169-C175, C186-C196, C191-C239, C220-C227, C248-C316, C255-C261, C272-C288, C281-C340, and C318-C328. An N-linked (GlcNAc...) asparagine glycan is attached at N309. N374 carries GPI-anchor amidated asparagine lipidation. The propeptide at 375-400 (PAVRPQPWVPSLFSCTLPLILLLSLW) is removed in mature form.

Belongs to the GDNFR family. Interacts with ARTN ligand and RET: forms a 2:2:2 ternary complex composed of ARTN ligand, GFRA3 and RET receptor. Interacts with SORL1. N-glycosylated. Widely expressed in adult and fetus which exhibit a similar pattern. Essentially not expressed in the central nervous system, but highly expressed in several sensory and sympathetic ganglia of the peripheral nervous system. Moderate expression in many non-neuronal tissues, particularly those of the digestive and urogenital systems, but high expression in stomach and appendix. Several types of glandular tissues show low expression. Very low or no expression detected in the hematopoietic system.

The protein resides in the cell membrane. In terms of biological role, receptor for artemin (ARTN), a growth factor that supports the survival of sensory and sympathetic peripheral neurons. ARTN-binding leads to autophosphorylation and activation of the RET receptor. In Homo sapiens (Human), this protein is GDNF family receptor alpha-3 (GFRA3).